A 520-amino-acid chain; its full sequence is Cyclic AMP-responsive element-binding protein 3-like protein 2 (520 aa).

Over methionine 1 to cysteine 379 the chain is Cytoplasmic. Serine 93 carries the phosphoserine modification. A Glycyl lysine isopeptide (Lys-Gly) (interchain with G-Cter in SUMO2) cross-link involves residue lysine 178. Serine 191 is subject to Phosphoserine. Residues alanine 195 to leucine 264 form a disordered region. Composition is skewed to low complexity over residues serine 208–proline 220 and serine 234–proline 255. The region spanning alanine 294 to leucine 357 is the bZIP domain. The tract at residues lysine 296–lysine 325 is basic motif. Positions leucine 336–leucine 357 are leucine-zipper. The helical; Signal-anchor for type II membrane protein transmembrane segment at leucine 380–proline 400 threads the bilayer. Topologically, residues tyrosine 401–phenylalanine 520 are lumenal. Positions arginine 427–leucine 430 match the S1P recognition motif. N-linked (GlcNAc...) asparagine glycosylation is found at asparagine 480, asparagine 504, and asparagine 517.

The protein belongs to the bZIP family. ATF subfamily. Binds DNA as a dimer. In terms of processing, upon ER stress, translocated to the Golgi apparatus, where it is processed by regulated intramembrane proteolysis (RIP) to release the cytosol-facing N-terminal transcription factor domain. The cleavage is performed sequentially by site-1 and site-2 proteases (S1P/MBTPS1 and S2P/MBTPS2). Post-translationally, N-glycosylated. Ubiquitinated by HRD1/SYVN1; undergoes 'Lys-48'-linked ubiquitination, followed by rapid proteasomal degradation under normal conditions. Upon ER stress, SYVN1 E3 ubiquitin-protein ligase dissociates from its substrate, ubiquitination does not occur and CREB3L2 is stabilized. Widely expressed with highest levels in placenta, lung, spleen and intestine, and lowest levels in heart, brain, skeletal muscle, thymus, colon and leukocytes. In fetal tissues, the weakest expression is detected in brain and heart.

It is found in the endoplasmic reticulum membrane. It localises to the nucleus. In terms of biological role, transcription factor involved in unfolded protein response (UPR). In the absence of endoplasmic reticulum (ER) stress, inserted into ER membranes, with N-terminal DNA-binding and transcription activation domains oriented toward the cytosolic face of the membrane. In response to ER stress, transported to the Golgi, where it is cleaved in a site-specific manner by resident proteases S1P/MBTPS1 and S2P/MBTPS2. The released N-terminal cytosolic domain is translocated to the nucleus to effect transcription of specific target genes. Plays a critical role in chondrogenesis by activating the transcription of SEC23A, which promotes the transport and secretion of cartilage matrix proteins, and possibly that of ER biogenesis-related genes. In a neuroblastoma cell line, protects cells from ER stress-induced death. In vitro activates transcription of target genes via direct binding to the CRE site. The protein is Cyclic AMP-responsive element-binding protein 3-like protein 2 (CREB3L2) of Homo sapiens (Human).